Here is a 74-residue protein sequence, read N- to C-terminus: NADH dehydrogenase [ubiquinone] 1 alpha subcomplex assembly factor 8 (74 aa).

The CHCH domain occupies 22–69; sequence LAACGAEAAAYGRCVQASTAPGGRLSKDFCAREFEALRSCFAAAAKKT. 2 consecutive short sequence motifs (cx9C motif) follow at residues 25 to 35 and 51 to 61; these read CGAEAAAYGRC and CAREFEALRSC. Intrachain disulfides connect Cys-25-Cys-61 and Cys-35-Cys-51.

Interacts with NDUFAF5.

Its subcellular location is the mitochondrion. Its function is as follows. Involved in the assembly of mitochondrial NADH:ubiquinone oxidoreductase complex (complex I, MT-ND1). Required to stabilize NDUFAF5. In Homo sapiens (Human), this protein is NADH dehydrogenase [ubiquinone] 1 alpha subcomplex assembly factor 8.